Here is a 1158-residue protein sequence, read N- to C-terminus: Transient receptor potential cation channel subfamily M member 5 (1158 aa).

The Cytoplasmic segment spans residues 1–729 (MQTTQSSCPG…LTRWRKFWGA (729 aa)). Serine 129 bears the Phosphoserine; by PKC mark. Residues cysteine 341, aspartate 350, aspartate 353, and glutamate 354 each contribute to the Ca(2+) site. The disordered stretch occupies residues 488–507 (GRRMEERGPPKRPAGQKWLP). Residues 552-572 (KIIKEMSHLEKEAEVARTMRE) adopt a coiled-coil conformation. The chain crosses the membrane as a helical span at residues 730–754 (PVTVFLGNVVMYFAFLFLFTYVLLV). The Extracellular segment spans residues 755 to 764 (DFRPPPQGPS). A helical membrane pass occupies residues 765–784 (GSEVTLYFWVFTLVLEEIRQ). Ca(2+)-binding residues include glutamate 781 and glutamine 784. Topologically, residues 785–805 (GFFTDEDTHLVKKFTLYVEDN) are cytoplasmic. Residues 806–824 (WNKCDMVAIFLFIVGVTCR) form a helical membrane-spanning segment. Ca(2+) contacts are provided by asparagine 807 and aspartate 810. Topologically, residues 825-831 (MVPSVFE) are extracellular. Residues 832-854 (AGRTVLAIDFMVFTLRLIHIFAI) form a helical membrane-spanning segment. Residues 855-863 (HKQLGPKII) are Cytoplasmic-facing. The chain crosses the membrane as a helical span at residues 864-893 (IVERMMKDVFFFLFFLSVWLVAYGVTTQAL). Residues 894–902 (LHPHDGRLE) lie on the Extracellular side of the membrane. The pore-forming intramembrane region spans 903-938 (WIFRRVLYRPYLQIFGQIPLDEIDEARVNCSLHPLL). Residues 917–919 (FGQ) carry the Selectivity filter motif. The Extracellular segment spans residues 939 to 950 (LESSASCPNLYA). The chain crosses the membrane as a helical span at residues 951–985 (NWLVILLLVTFLLVTNVLLMNLLIAMFSYTFQVVQ). Over 986–1158 (GNADMFWKFQ…LESGLPPSDT (173 aa)) the chain is Cytoplasmic. Residue glutamate 1002 coordinates Ca(2+). The span at 1127–1141 (TYSSSQNCGCRSQPA) shows a compositional bias: polar residues. The segment at 1127 to 1158 (TYSSSQNCGCRSQPASARDREYLESGLPPSDT) is disordered.

Belongs to the transient receptor (TC 1.A.4) family. LTrpC subfamily. TRPM5 sub-subfamily. Homotetramer. In terms of processing, multiple phosphorylation sites regulate the Gq/ TRPM5 modulation axis, with the Ser-129 playing a substantial role in this positive modulation. Strongly expressed in liver, heart, testis, brain and kidney. Detected in fetal liver, kidney, spleen, brain, heart and lung, and in adult skin, eyes, spleen, stomach, small intestine, colon, lung, bladder, pancreas and thymus. Biallelically expressed at all stages and tissues examined. Also expressed in subsets of taste receptor cells of the tongue, in olfactory sensory neurons of the main olfactory epithelium and in the vomeronasal organ.

The protein resides in the cell membrane. The catalysed reaction is Na(+)(in) = Na(+)(out). The enzyme catalyses K(+)(in) = K(+)(out). Ca(2+)-activated cation channel. Displays voltage dependence modulation. Regulated by PI(4,5)P2 levels. PI(4,5)P 2 reverses the Ca(2+) -induced desensitization of channels. Inhibited by flufenamic acid with an IC(50) of 24.5 uM and spermine with an IC(50) of 37 uM. Is a highly temperature-sensitive, heat activated channel showing a steep increase of inward currents at temperatures between 15 and 35 degrees Celsius. Heat activation is due to a shift of the voltage-dependent activation curve to negative potentials. The channel is blocked by extracellular acidification. Its function is as follows. Monovalent cation-selective ion channel activated by intracellular Ca(2+) in a voltage- and temperature-dependent manner. Mediates the transport of Na(+), K(+) and Cs(+) ions equally well. Activated directly by increase in intracellular Ca(2+), but is impermeable to it. The activation mechanism of TRPM5 involves a multistep process. TRPM5 activation involves ligand binding (i.e., tastant molecule, glucose stimulation) to Gq/G-protein coupled receptors (GPCR) and leads to the breakdown of phosphatidylinositol bisphosphate (PIP2) into diacylglycerol (DAG) and inositol trisphosphate (IP3), IP3 binds to its receptors in the endoplasmic reticulum and cause Ca(2+) release. Simultaneously with the intracellular Ca(2+) release, DAG activates the protein kinase C (PKC), which phosphorylates the TRPM5 channel. This phosphorylation combined with the bound Ca(2+), leads to a robust inward current allowing the entry of sodium ions (Na+) into the cell. This ion influx depolarizes the cell membrane, generating action potentials that propagate TRPM5 signals. Is a key player in sensing sweet, umami and bitter stimuli. May also be involved in sensing semiochemicals. Involved in insulin secretion by pancreatic beta cells. The chain is Transient receptor potential cation channel subfamily M member 5 from Mus musculus (Mouse).